Reading from the N-terminus, the 336-residue chain is Polyprenyl transferase dpasC (336 aa).

The chain crosses the membrane as a helical span at residues 34–54; sequence LFTIFAGGMFLFVASFPTTAF. Asn-66 carries an N-linked (GlcNAc...) asparagine glycan. 7 helical membrane-spanning segments follow: residues 80–100, 125–145, 181–201, 205–225, 253–273, 274–294, and 311–331; these read ALCL…NDWI, QAML…HFML, YILG…IFHG, FAES…WTIF, HVHL…PMYL, NQFH…LSLL, and LHVD…IELL.

This sequence belongs to the UbiA prenyltransferase family. Mg(2+) serves as cofactor.

It is found in the membrane. It participates in secondary metabolite biosynthesis; terpenoid biosynthesis. In terms of biological role, polyprenyl transferase; part of the gene cluster that mediates the biosynthesis of the diterpenoid pyrones subglutinols A and B. The first step of the pathway is the synthesis of the alpha-pyrone moiety by the polyketide synthase dpasA via condensation of one acetyl-CoA starter unit with 3 malonyl-CoA units and 2 methylations. The alpha-pyrone is then combined with geranylgeranyl pyrophosphate (GGPP) formed by the GGPP synthase dpasD through the action of the prenyltransferase dpasC to yield a linear alpha-pyrone diterpenoid. Subsequent steps in the diterpenoid pyrone biosynthetic pathway involve the decalin core formation, which is initiated by the epoxidation of the C10-C11 olefin by the FAD-dependent oxidoreductase dpasE, and is followed by a cyclization cascade catalyzed by the terpene cyclase dpasB. The FAD-linked oxidoreductase dpasF is then involved in tetrahydrofuran (THF) ring formation at the C5 unit to complete the formation of subglutinols A and B. DpasF possesses also an additional catalytic ability of multi-step oxidations to generate a new DDP analog with an enone system at the C5 named FDDP A. The polypeptide is Polyprenyl transferase dpasC (Apiospora sacchari (Arthrinium sacchari)).